Here is a 594-residue protein sequence, read N- to C-terminus: Homeobox protein prospero homolog 1 (594 aa).

Polar residues-rich tracts occupy residues 1-13 (MSSG…ATAQ) and 36-50 (PPVN…SSNR). Disordered regions lie at residues 1 to 20 (MSSG…NGFS), 30 to 180 (IYYS…FQPQ), and 358 to 389 (DTSS…SASA). Residues 73 to 101 (STSVSSNSSSSSSTSNTNSTPSSSSTSSK) show a composition bias toward low complexity. Positions 105–117 (EGMTETETMTASI) are enriched in polar residues. Over residues 118 to 135 (EQEKVIQNEESEAGKDGM) the composition is skewed to basic and acidic residues. A compositionally biased stretch (acidic residues) spans 136-162 (EEHDDGMNDFEIIDDTNDEVEESEERE). The segment covering 369 to 378 (KVEIKKEDAM) has biased composition (basic and acidic residues). Residues 379-389 (SSRASPLSASA) are compositionally biased toward low complexity. The 59-residue stretch at 435 to 493 (SSMLTPMHLRKAKLMFFYTRYPNSNLLKSYFPDIRFNKNNTAQLVKWFSNFREFYYNQM) folds into the Prospero-type homeo domain. A homeo-Prospero region spans residues 435-593 (SSMLTPMHLR…KEPNFLERLE (159 aa)). Positions 494–593 (EKFARQALAE…KEPNFLERLE (100 aa)) constitute a Prospero domain.

This sequence belongs to the Prospero homeodomain family.

The protein localises to the nucleus. Transcription factor involved in developmental processes. Controls the transcription of genes required for excretory canal formation. This chain is Homeobox protein prospero homolog 1, found in Caenorhabditis elegans.